An 877-amino-acid chain; its full sequence is MADVKISEIAQELGYTSKEIIEKANEMGLEDIKSPNKKVSSEIAEAIYQYVQSGEILDVVKKIAKPKKESTAKKTTKKDEVKKEEKKTTTKKESKNPAKAVSEKKDEVKKEEKQPENPIKNEILEEKKEEIKLDEKLGSNLNLAKRRGLVIVKKKKEESNETQINNEEKISTQATQGLSLSMIFSNSDESLKRKKKEKKNHPVASKKENTTKMDLLGDKDFADISLEDDDMVVLPDFSIKENKPAQPTNKKQPNILKQSLNNSINPFGEGGIQRRSRKKPPKKVEKKESEAITSVSIPKEIRVYEFAEKLGKNTGEIISKLFMLGMMTTKNDFLDEDAIEILAAEFGVEINIIDEADEFDYVKDYDENQTEENLSQRAPVITIMGHVDHGKTSLLDYIRKSRIASGEAGGITQHVGAYMVEKNGRKITFIDTPGHEAFTAMRARGASITDIVIIVVAADDGVKPQTKEAINHAKAANVPIIIAINKMDKENANPDMVKTQLAEMEIMPVEWGGSHEFVPVSAKKGDGVEDLLEIVLLQADILELKANPKAHAKASIIESSVQKGRGPVATIIVQNGTLRVGNTVVAGEAYGKVRAMSDDQGKALKEIGPGECGVIIGLSEVADAGETLIAVDSDKQAREYANKRHEYNRQKELSKSTKVSIDELGAKIKEGNLKALPVILKADVQGSLEAIKASLEKLKNDEIKVNIIHSGVGGITQSDIELASASENSIVLGFNIRPTGEIKERAKDKGVEIKTYNVIYNLLDDVKALLGGMMSPIISEEQLGQAEIRQVINVPKLGQIAGCMVTEGTINRGAKIRLIRDGVVVFEGNVSSLKRFKDDVREVAKGYECGVGIEGCNDMRVGDYIESYKEVEEQVSL.

A compositionally biased stretch (basic and acidic residues) spans Pro-66–Pro-115. 3 disordered regions span residues Pro-66–Lys-127, Ser-187–Glu-208, and Glu-241–Glu-290. Positions Lys-192–His-201 are enriched in basic residues. The segment covering Ala-245–Asn-265 has biased composition (polar residues). The 168-residue stretch at Gln-376–Glu-543 folds into the tr-type G domain. A G1 region spans residues Gly-385 to Thr-392. Residue Gly-385–Thr-392 coordinates GTP. The G2 stretch occupies residues Gly-410 to His-414. The tract at residues Asp-431–Gly-434 is G3. GTP-binding positions include Asp-431 to His-435 and Asn-485 to Asp-488. Residues Asn-485–Asp-488 form a G4 region. The segment at Ser-521 to Lys-523 is G5.

Belongs to the TRAFAC class translation factor GTPase superfamily. Classic translation factor GTPase family. IF-2 subfamily.

The protein localises to the cytoplasm. Functionally, one of the essential components for the initiation of protein synthesis. Protects formylmethionyl-tRNA from spontaneous hydrolysis and promotes its binding to the 30S ribosomal subunits. Also involved in the hydrolysis of GTP during the formation of the 70S ribosomal complex. This is Translation initiation factor IF-2 from Campylobacter lari (strain RM2100 / D67 / ATCC BAA-1060).